The primary structure comprises 233 residues: C-type lectin domain-containing protein 87 (233 aa).

The N-terminal stretch at 1 to 19 (MRFCLLVAFILPGLFLVHA) is a signal peptide. The O-linked (Xyl...) (chondroitin sulfate) serine glycan is linked to serine 31. Asparagine 81 carries an N-linked (GlcNAc...) asparagine glycan. The C-type lectin domain occupies 93–223 (FADSCYWIEK…CTYMLYSICE (131 aa)). Cystine bridges form between cysteine 114–cysteine 222 and cysteine 193–cysteine 214. A glycan (N-linked (GlcNAc...) asparagine) is linked at asparagine 225.

In Caenorhabditis elegans, this protein is C-type lectin domain-containing protein 87.